Reading from the N-terminus, the 298-residue chain is 4-hydroxy-tetrahydrodipicolinate synthase (298 aa).

Residue Thr51 participates in pyruvate binding. Tyr139 functions as the Proton donor/acceptor in the catalytic mechanism. Lys167 serves as the catalytic Schiff-base intermediate with substrate. Pyruvate is bound at residue Ile209.

The protein belongs to the DapA family. In terms of assembly, homotetramer; dimer of dimers.

It localises to the cytoplasm. It catalyses the reaction L-aspartate 4-semialdehyde + pyruvate = (2S,4S)-4-hydroxy-2,3,4,5-tetrahydrodipicolinate + H2O + H(+). It participates in amino-acid biosynthesis; L-lysine biosynthesis via DAP pathway; (S)-tetrahydrodipicolinate from L-aspartate: step 3/4. Catalyzes the condensation of (S)-aspartate-beta-semialdehyde [(S)-ASA] and pyruvate to 4-hydroxy-tetrahydrodipicolinate (HTPA). The protein is 4-hydroxy-tetrahydrodipicolinate synthase of Histophilus somni (strain 129Pt) (Haemophilus somnus).